The sequence spans 153 residues: Fucose mutarotase (153 aa).

His-24 functions as the Proton donor in the catalytic mechanism. Asp-32 serves as a coordination point for substrate. Asp-69 is an active-site residue. Residues Met-78, Tyr-119, Tyr-137, and Asn-139 each coordinate substrate. Tyr-119 is a catalytic residue.

Belongs to the RbsD / FucU family.

It catalyses the reaction alpha-L-fucose = beta-L-fucose. Its function is as follows. Involved in the interconversion between alpha- and beta-L-fucoses. This chain is Fucose mutarotase (fuom), found in Danio rerio (Zebrafish).